The following is a 113-amino-acid chain: U11-theraphotoxin-Hhn1a (113 aa).

The first 21 residues, 1–21 (MNTVRVAFLLVFVLAVSLGQA), serve as a signal peptide directing secretion. Residues 22-74 (DKDENRMEMQEKTEQGKSYLDFAENLLLQKLEELEAKLLEEDSEESRNSRQKR) constitute a propeptide that is removed on maturation. A disordered region spans residues 61–83 (EEDSEESRNSRQKRCIGEGVPCD). Disulfide bonds link Cys-75–Cys-90, Cys-82–Cys-95, and Cys-89–Cys-110.

Belongs to the neurotoxin 14 (magi-1) family. 01 (HNTX-16) subfamily. Expressed by the venom gland.

Its subcellular location is the secreted. Functionally, probable ion channel inhibitor. The chain is U11-theraphotoxin-Hhn1a from Cyriopagopus hainanus (Chinese bird spider).